The sequence spans 393 residues: METFLFTSESVNEGHPDKLCDQISDAVLDACLTQDPDSKVACETCTKTNMVMVFGEITTKADVDYEQIVRKTCREIGFISDDVGLDADHCKVLVNIEQQSPDIAQGVHGHFTKRPEEIGAGDQGHMFGYATDETPELMPLTHVLATKLGAKLTEVRKNGTCPWLRPDGKTQVTIEYRNEGGAMVPERVHTVLISTQHDETVTNDQIAADLKEHVIKPVIPEKYLDENTIFHLNPSGRFVIGGPHGDAGLTGRKIIIDTYGGWGAHGGGAFSGKDPTKVDRSGAYIVRQAAKSIVAAGLARRCLVQVSYAIGVRGALSIFVDSYGTGSIPDKEILEIIKEHFDFRPGMITINLDLKRGGNGRFQKTAAYGHFGRDDPDFTWETVKPLKWEKAQA.

Residue Glu-9 participates in Mg(2+) binding. Residue His-15 participates in ATP binding. Glu-43 serves as a coordination point for K(+). Residues Glu-56 and Gln-99 each coordinate L-methionine. ATP is bound by residues 167–169 (DGK), 235–238 (SGRF), Asp-246, 252–253 (RK), Ala-269, Lys-273, and Lys-277. Residue Asp-246 coordinates L-methionine. Lys-277 contributes to the L-methionine binding site.

Belongs to the AdoMet synthase family. As to quaternary structure, homotetramer. It depends on Mn(2+) as a cofactor. Requires Mg(2+) as cofactor. Co(2+) serves as cofactor. The cofactor is K(+). In terms of tissue distribution, roots and shoots.

The protein resides in the cytoplasm. The enzyme catalyses L-methionine + ATP + H2O = S-adenosyl-L-methionine + phosphate + diphosphate. It functions in the pathway amino-acid biosynthesis; S-adenosyl-L-methionine biosynthesis; S-adenosyl-L-methionine from L-methionine: step 1/1. Its function is as follows. Catalyzes the formation of S-adenosylmethionine from methionine and ATP. The reaction comprises two steps that are both catalyzed by the same enzyme: formation of S-adenosylmethionine (AdoMet) and triphosphate, and subsequent hydrolysis of the triphosphate. The sequence is that of S-adenosylmethionine synthase 2 (SAMS2) from Pinus contorta (Shore pine).